The sequence spans 203 residues: uncharacterized protein (203 aa).

The 99-residue stretch at 90 to 188 (EKRQHVRVQP…YENIIGRYVM (99 aa)) folds into the PilZ domain.

The protein to A.aeolicus aq_820 and aq_1583.

This is an uncharacterized protein from Aquifex aeolicus (strain VF5).